We begin with the raw amino-acid sequence, 386 residues long: Alanine racemase 1 (386 aa).

The active-site Proton acceptor; specific for D-alanine is Lys38. An N6-(pyridoxal phosphate)lysine modification is found at Lys38. Arg136 serves as a coordination point for substrate. Residue Tyr267 is the Proton acceptor; specific for L-alanine of the active site. Met315 serves as a coordination point for substrate.

It belongs to the alanine racemase family. It depends on pyridoxal 5'-phosphate as a cofactor.

It catalyses the reaction L-alanine = D-alanine. It participates in amino-acid biosynthesis; D-alanine biosynthesis; D-alanine from L-alanine: step 1/1. Functionally, catalyzes the interconversion of L-alanine and D-alanine. May also act on other amino acids. The protein is Alanine racemase 1 (alr1) of Clostridium acetobutylicum (strain ATCC 824 / DSM 792 / JCM 1419 / IAM 19013 / LMG 5710 / NBRC 13948 / NRRL B-527 / VKM B-1787 / 2291 / W).